Here is a 173-residue protein sequence, read N- to C-terminus: Ribosome maturation factor RimM (173 aa).

The 74-residue stretch at 97 to 170 folds into the PRC barrel domain; that stretch reads EHEYYYHEII…RIRVHIMEGL (74 aa).

It belongs to the RimM family. As to quaternary structure, binds ribosomal protein uS19.

The protein resides in the cytoplasm. In terms of biological role, an accessory protein needed during the final step in the assembly of 30S ribosomal subunit, possibly for assembly of the head region. Essential for efficient processing of 16S rRNA. May be needed both before and after RbfA during the maturation of 16S rRNA. It has affinity for free ribosomal 30S subunits but not for 70S ribosomes. This chain is Ribosome maturation factor RimM, found in Shouchella clausii (strain KSM-K16) (Alkalihalobacillus clausii).